Consider the following 253-residue polypeptide: Uracil-DNA glycosylase (253 aa).

D79 (proton acceptor) is an active-site residue.

This sequence belongs to the uracil-DNA glycosylase (UDG) superfamily. UNG family.

The protein resides in the cytoplasm. It carries out the reaction Hydrolyzes single-stranded DNA or mismatched double-stranded DNA and polynucleotides, releasing free uracil.. Its function is as follows. Excises uracil residues from the DNA which can arise as a result of misincorporation of dUMP residues by DNA polymerase or due to deamination of cytosine. This is Uracil-DNA glycosylase from Xylella fastidiosa (strain 9a5c).